A 497-amino-acid chain; its full sequence is L-arabinose isomerase (497 aa).

Glutamate 306, glutamate 331, histidine 348, and histidine 447 together coordinate Mn(2+).

This sequence belongs to the arabinose isomerase family. Mn(2+) serves as cofactor.

It catalyses the reaction beta-L-arabinopyranose = L-ribulose. It participates in carbohydrate degradation; L-arabinose degradation via L-ribulose; D-xylulose 5-phosphate from L-arabinose (bacterial route): step 1/3. Its function is as follows. Catalyzes the conversion of L-arabinose to L-ribulose. The polypeptide is L-arabinose isomerase (Halalkalibacterium halodurans (strain ATCC BAA-125 / DSM 18197 / FERM 7344 / JCM 9153 / C-125) (Bacillus halodurans)).